The sequence spans 476 residues: UDP-N-acetylmuramate--L-alanine ligase (476 aa).

ATP is bound at residue G107 to T113.

This sequence belongs to the MurCDEF family.

It is found in the cytoplasm. It carries out the reaction UDP-N-acetyl-alpha-D-muramate + L-alanine + ATP = UDP-N-acetyl-alpha-D-muramoyl-L-alanine + ADP + phosphate + H(+). It functions in the pathway cell wall biogenesis; peptidoglycan biosynthesis. Cell wall formation. This is UDP-N-acetylmuramate--L-alanine ligase from Roseiflexus castenholzii (strain DSM 13941 / HLO8).